The following is a 1077-amino-acid chain: Ubiquitin carboxyl-terminal hydrolase 28 (1077 aa).

Residues 60–80 (DERVKEPSQDTVATEPSEVEG) form a disordered region. Ser-67 carries the post-translational modification Phosphoserine. Residues 97-116 (DNKDDLQAAIALSLLESPKI) enclose the UIM domain. Lys-99 is covalently cross-linked (Glycyl lysine isopeptide (Lys-Gly) (interchain with G-Cter in SUMO2)). Positions 162–650 (VGLKNVGNTC…SAYCLMYIND (489 aa)) constitute a USP domain. The Nucleophile role is filled by Cys-171. The residue at position 375 (Ser-375) is a Phosphoserine. Residues 477 to 535 (HCSVSDQTSKESTSTESSSQDVESTFSSPEDSLPKSKPLTSSRSSMEMPSQPAPRTVTD) are disordered. The span at 481–501 (SDQTSKESTSTESSSQDVEST) shows a compositional bias: low complexity. Over residues 514–524 (PLTSSRSSMEM) the composition is skewed to polar residues. Ser-550 is subject to Phosphoserine. Residue His-600 is the Proton acceptor of the active site. Positions 697-728 (EEQSCKIPQMESSTNSSSQDYSTSQEPSVASS) are disordered. Residues 707 to 724 (ESSTNSSSQDYSTSQEPS) show a composition bias toward low complexity. Ser-714 is subject to Phosphoserine. A Glycyl lysine isopeptide (Lys-Gly) (interchain with G-Cter in SUMO2) cross-link involves residue Lys-759. Thr-1048 is subject to Phosphothreonine.

It belongs to the peptidase C19 family. USP28 subfamily. In terms of assembly, interacts with ZNF304. Interacts with PRKD1. Interacts with TP53BP1. Interacts with isoform 1 of FBXW7; following DNA damage, dissociates from FBXW7 leading to degradation of MYC. Degraded upon nickel ion level or hypoxia exposure. In terms of processing, phosphorylated upon DNA damage at Ser-67 and Ser-714, by ATM or ATR. Phosphorylated by PRKD1.

It localises to the nucleus. The protein resides in the nucleoplasm. The catalysed reaction is Thiol-dependent hydrolysis of ester, thioester, amide, peptide and isopeptide bonds formed by the C-terminal Gly of ubiquitin (a 76-residue protein attached to proteins as an intracellular targeting signal).. Functionally, deubiquitinase involved in DNA damage response checkpoint and MYC proto-oncogene stability. Involved in DNA damage induced apoptosis by specifically deubiquitinating proteins of the DNA damage pathway such as CLSPN. Also involved in G2 DNA damage checkpoint, by deubiquitinating CLSPN, and preventing its degradation by the anaphase promoting complex/cyclosome (APC/C). In contrast, it does not deubiquitinate PLK1. Specifically deubiquitinates MYC in the nucleoplasm, leading to prevent MYC degradation by the proteasome: acts by specifically interacting with isoform 1 of FBXW7 (FBW7alpha) in the nucleoplasm and counteracting ubiquitination of MYC by the SCF(FBW7) complex. In contrast, it does not interact with isoform 4 of FBXW7 (FBW7gamma) in the nucleolus, allowing MYC degradation and explaining the selective MYC degradation in the nucleolus. Deubiquitinates ZNF304, hence preventing ZNF304 degradation by the proteasome and leading to the activated KRAS-mediated promoter hypermethylation and transcriptional silencing of tumor suppressor genes (TSGs) in a subset of colorectal cancers (CRC) cells. The sequence is that of Ubiquitin carboxyl-terminal hydrolase 28 (USP28) from Homo sapiens (Human).